The primary structure comprises 259 residues: Archaerhodopsin-2 (259 aa).

A propeptide spanning residues 1-6 (MDPIAL) is cleaved from the precursor. At Gln7 the chain carries Pyrrolidone carboxylic acid. The Extracellular portion of the chain corresponds to 7 to 18 (QAGFDLLNDGRP). The helical transmembrane segment at 19–40 (ETLWLGIGTLLMLIGTFYFIAR) threads the bilayer. Topologically, residues 41–49 (GWGVTDKEA) are cytoplasmic. The helical transmembrane segment at 50-71 (REYYAITILVPGIASAAYLAMF) threads the bilayer. Residues 72–90 (FGIGVTEVELASGTVLDIY) lie on the Extracellular side of the membrane. The helical transmembrane segment at 91-112 (YARYADWLFTTPLLLLDLALLA) threads the bilayer. The Cytoplasmic portion of the chain corresponds to 113–115 (KVD). Residues 116–138 (RVTIGTLIGVDALMIVTGLIGAL) form a helical membrane-spanning segment. Residues 139–142 (SKTP) lie on the Extracellular side of the membrane. The helical transmembrane segment at 143-171 (LARYTWWLFSTIAFLFVLYYLLTSLRSAA) threads the bilayer. Residues 172–174 (AKR) lie on the Cytoplasmic side of the membrane. The helical transmembrane segment at 175–203 (SEEVRSTFNTLTALVAVLWTAYPILWIVG) threads the bilayer. Residues 204 to 211 (TEGAGVVG) lie on the Extracellular side of the membrane. Residues 212–244 (LGIETLAFMVLDVTAKVGFGFVLLRSRAILGET) traverse the membrane as a helical segment. Lys227 is modified (N6-(retinylidene)lysine). Residues 245-259 (EAPEPSAGADASAAD) are Cytoplasmic-facing.

The protein belongs to the archaeal/bacterial/fungal opsin family.

It localises to the cell membrane. In terms of biological role, light-driven proton pump. It may interact with bacterioruberin in the claret membrane. The sequence is that of Archaerhodopsin-2 from Halobacterium sp. (strain aus-2).